The sequence spans 307 residues: Aspartate carbamoyltransferase catalytic subunit (307 aa).

Carbamoyl phosphate contacts are provided by arginine 54 and threonine 55. Lysine 83 lines the L-aspartate pocket. Positions 104, 132, and 135 each coordinate carbamoyl phosphate. Positions 165 and 228 each coordinate L-aspartate. Carbamoyl phosphate contacts are provided by leucine 267 and proline 268.

It belongs to the aspartate/ornithine carbamoyltransferase superfamily. ATCase family. As to quaternary structure, heterododecamer (2C3:3R2) of six catalytic PyrB chains organized as two trimers (C3), and six regulatory PyrI chains organized as three dimers (R2).

The catalysed reaction is carbamoyl phosphate + L-aspartate = N-carbamoyl-L-aspartate + phosphate + H(+). It participates in pyrimidine metabolism; UMP biosynthesis via de novo pathway; (S)-dihydroorotate from bicarbonate: step 2/3. Functionally, catalyzes the condensation of carbamoyl phosphate and aspartate to form carbamoyl aspartate and inorganic phosphate, the committed step in the de novo pyrimidine nucleotide biosynthesis pathway. In Clostridium acetobutylicum (strain ATCC 824 / DSM 792 / JCM 1419 / IAM 19013 / LMG 5710 / NBRC 13948 / NRRL B-527 / VKM B-1787 / 2291 / W), this protein is Aspartate carbamoyltransferase catalytic subunit.